The chain runs to 445 residues: Exodeoxyribonuclease 7 large subunit (445 aa).

It belongs to the XseA family. In terms of assembly, heterooligomer composed of large and small subunits.

The protein localises to the cytoplasm. It carries out the reaction Exonucleolytic cleavage in either 5'- to 3'- or 3'- to 5'-direction to yield nucleoside 5'-phosphates.. In terms of biological role, bidirectionally degrades single-stranded DNA into large acid-insoluble oligonucleotides, which are then degraded further into small acid-soluble oligonucleotides. This chain is Exodeoxyribonuclease 7 large subunit, found in Staphylococcus aureus (strain bovine RF122 / ET3-1).